Reading from the N-terminus, the 76-residue chain is Omega-conotoxin-like TxO1 (76 aa).

A signal peptide spans 1–22 (MKLTCVVIVAVLFLTVWTFATA). A propeptide spanning residues 23 to 50 (DDSGNGLEKLFSNAHHEMKNPEASKLNE) is cleaved from the precursor. 3 disulfide bridges follow: Cys-52–Cys-67, Cys-59–Cys-70, and Cys-66–Cys-75.

The protein belongs to the conotoxin O1 superfamily. Expressed by the venom duct.

The protein resides in the secreted. Functionally, omega-conotoxins act at presynaptic membranes, they bind and block voltage-gated calcium channels (Cav). This chain is Omega-conotoxin-like TxO1, found in Conus textile (Cloth-of-gold cone).